The sequence spans 309 residues: Protease HtpX homolog (309 aa).

Helical transmembrane passes span 7–27 (AILLAGLTALFMGVGYLIGGA) and 28–48 (SGAMIALVVAAATNIFAYWNS). Residue His-130 participates in Zn(2+) binding. Glu-131 is an active-site residue. His-134 contacts Zn(2+). Transmembrane regions (helical) follow at residues 145 to 165 (VTATIAGAVSMLAQFGMFFGG) and 173 to 193 (GLGVIGSIAMMILAPIAAMLV). Glu-202 provides a ligand contact to Zn(2+).

Belongs to the peptidase M48B family. Requires Zn(2+) as cofactor.

It localises to the cell inner membrane. In Rhodopseudomonas palustris (strain BisA53), this protein is Protease HtpX homolog.